Here is a 329-residue protein sequence, read N- to C-terminus: GMP reductase (329 aa).

Residue cysteine 178 is the Thioimidate intermediate of the active site. 207–230 is a binding site for NADP(+); it reads VIADGGIRTHGDIAKSIRMGATMV.

Belongs to the IMPDH/GMPR family. GuaC type 2 subfamily.

The catalysed reaction is IMP + NH4(+) + NADP(+) = GMP + NADPH + 2 H(+). Catalyzes the irreversible NADPH-dependent deamination of GMP to IMP. It functions in the conversion of nucleobase, nucleoside and nucleotide derivatives of G to A nucleotides, and in maintaining the intracellular balance of A and G nucleotides. In Lactococcus lactis subsp. lactis (strain IL1403) (Streptococcus lactis), this protein is GMP reductase.